The following is a 99-amino-acid chain: Cell division protein FtsB (99 aa).

The Cytoplasmic portion of the chain corresponds to 1-3 (MKF). The helical transmembrane segment at 4–21 (FVITLIVLLGLLQYRLWS) threads the bilayer. Topologically, residues 22–99 (GDNSLPEYFV…GDRAVSSPSQ (78 aa)) are periplasmic. A coiled-coil region spans residues 31–73 (VLQKQIAAQQDGNAKLNERNQVLKEEIIDLKSGTEAIEERARN).

The protein belongs to the FtsB family. Part of a complex composed of FtsB, FtsL and FtsQ.

The protein localises to the cell inner membrane. In terms of biological role, essential cell division protein. May link together the upstream cell division proteins, which are predominantly cytoplasmic, with the downstream cell division proteins, which are predominantly periplasmic. The polypeptide is Cell division protein FtsB (Shewanella oneidensis (strain ATCC 700550 / JCM 31522 / CIP 106686 / LMG 19005 / NCIMB 14063 / MR-1)).